The chain runs to 354 residues: Adenine deaminase (354 aa).

Residues His-20, His-22, and His-200 each coordinate Zn(2+). Glu-203 serves as the catalytic Proton donor. Asp-281 is a binding site for Zn(2+). Residue Asp-282 coordinates substrate.

The protein belongs to the metallo-dependent hydrolases superfamily. Adenosine and AMP deaminases family. Adenine deaminase type 2 subfamily. Zn(2+) is required as a cofactor.

The enzyme catalyses adenine + H2O + H(+) = hypoxanthine + NH4(+). Its function is as follows. Catalyzes the hydrolytic deamination of adenine to hypoxanthine. Plays an important role in the purine salvage pathway and in nitrogen catabolism. The sequence is that of Adenine deaminase from Cupriavidus metallidurans (strain ATCC 43123 / DSM 2839 / NBRC 102507 / CH34) (Ralstonia metallidurans).